The sequence spans 197 residues: Carbohydrate-binding domain-containing protein C2E1P3.05c (197 aa).

A signal peptide spans 1-23 (MLTQSLFLTVLTLALSLVSKTSA). 2 CBM1 domains span residues 25-61 (QCSP…SQCI) and 68-104 (PCAK…SQCI). Cystine bridges form between cysteine 33-cysteine 50, cysteine 44-cysteine 60, cysteine 76-cysteine 93, and cysteine 87-cysteine 103. The disordered stretch occupies residues 115–163 (SSAASSTTSTTSSSSLVSSTTLTSSSPSAVSSTTSIPSISSTISSSVST). N-linked (GlcNAc...) asparagine glycosylation is found at asparagine 182 and asparagine 193.

It localises to the secreted. In Schizosaccharomyces pombe (strain 972 / ATCC 24843) (Fission yeast), this protein is Carbohydrate-binding domain-containing protein C2E1P3.05c.